A 152-amino-acid polypeptide reads, in one-letter code: Sorting nexin-3 (152 aa).

The 118-residue stretch at 30–147 folds into the PX domain; it reads NFLEIEVRSP…CAFIQDPQWD (118 aa). Residues Arg-73, Ser-75, Lys-99, Arg-104, and Arg-113 each contribute to the a 1,2-diacyl-sn-glycero-3-phospho-(1D-myo-inositol-3-phosphate) site.

This sequence belongs to the sorting nexin family.

It localises to the cytoplasm. Its subcellular location is the golgi apparatus membrane. The protein localises to the prevacuolar compartment membrane. Required for retention of late Golgi membrane proteins. Component of the retrieval machinery that functions by direct interaction with the cytosolic tails of certain TGN membrane proteins during the sorting/budding process at the prevacuolar compartment. Binds phosphatidylinositol 3-phosphate (PtdIns(P3)). In Yarrowia lipolytica (strain CLIB 122 / E 150) (Yeast), this protein is Sorting nexin-3 (SNX3).